A 721-amino-acid polypeptide reads, in one-letter code: K(+)-insensitive pyrophosphate-energized proton pump (721 aa).

A run of 5 helical transmembrane segments spans residues 8-28 (LLGV…AVWV), 57-77 (YRTL…AIDM), 82-102 (FGLT…AGYL), 136-156 (VMGL…YLVF), and 168-188 (LVAL…GGGI). Position 191 (Lys191) interacts with substrate. Positions 194, 198, 221, and 224 each coordinate Mg(2+). 5 helical membrane-spanning segments follow: residues 247 to 267 (AIFL…IILF), 294 to 314 (ISLA…IGAF), 323 to 343 (ALAL…IVKI), 374 to 394 (YGVG…VLGI), and 416 to 436 (AGIF…GIII). Asp446 contributes to the Mg(2+) binding site. 4 helical membrane-spanning segments follow: residues 483–503 (AIAS…FEIV), 527–547 (LINA…YFFS), 599–619 (FLIP…LLGW), and 621–641 (ALAG…LLMA). 3 residues coordinate Ca(2+): Asp648, Asp672, and Asp676. A substrate-binding site is contributed by Lys679. Residues 698–718 (VVFTYVIVSTNIALGIWPSGL) form a helical membrane-spanning segment.

It belongs to the H(+)-translocating pyrophosphatase (TC 3.A.10) family. K(+)-insensitive subfamily. As to quaternary structure, homodimer. Mg(2+) serves as cofactor.

The protein localises to the cell membrane. The catalysed reaction is diphosphate + H2O + H(+)(in) = 2 phosphate + 2 H(+)(out). In terms of biological role, proton pump that utilizes the energy of pyrophosphate hydrolysis as the driving force for proton movement across the membrane. Generates a proton motive force. The sequence is that of K(+)-insensitive pyrophosphate-energized proton pump from Pyrobaculum aerophilum (strain ATCC 51768 / DSM 7523 / JCM 9630 / CIP 104966 / NBRC 100827 / IM2).